Consider the following 177-residue polypeptide: Adenine phosphoribosyltransferase (177 aa).

Belongs to the purine/pyrimidine phosphoribosyltransferase family. As to quaternary structure, homodimer.

It localises to the cytoplasm. It catalyses the reaction AMP + diphosphate = 5-phospho-alpha-D-ribose 1-diphosphate + adenine. It functions in the pathway purine metabolism; AMP biosynthesis via salvage pathway; AMP from adenine: step 1/1. Its function is as follows. Catalyzes a salvage reaction resulting in the formation of AMP, that is energically less costly than de novo synthesis. In Mycoplasma pneumoniae (strain ATCC 29342 / M129 / Subtype 1) (Mycoplasmoides pneumoniae), this protein is Adenine phosphoribosyltransferase.